A 495-amino-acid chain; its full sequence is MRCIGISNRDFVEGVSGGSWVDIVLEHGSCVTTMAKNKPTLDFEVIKTEAKQPATLRKSCFEAKLTNTTTESRCPTLGEPSLNEEQDKRLVCKHSMVDRGWGNGCGLFGKGGIVTCAMFTCKKNMEGKFVHPENLEYTIVITPHSGEEHAVGNDTGKHGKELKITPQSSITEAELTGYGTVTMQCSPRTGLDFNEIVLLQMEDKAWLVHRQWFLDLPLPWLPGADTQGSNWIQKETLVTFKNPHAKKQDVVVLGSQEGAMQTALTGAAEIQMSSGNLLFTGHLKCRLRMDKLQLKGISYSMCTGKFKIVKEFAETQHGTIVIRVQYEGDGSPCKIPFEIIDLEKRHVLGCLITVYPIVTEKDSPVNIEADPPFGDSYIIIGIEPGQLKLHWLKKGSSIGQMFETTMRGAKRMAILGDTAWDFGSLGGVFTSIGKALNQVFGTIYGAAFSGVSWTMKILIGVIITCIGMNSRSTSLSVSLVLVGVVTLYLGGMVHA.

The Extracellular segment spans residues 1–445 (MRCIGISNRD…LNQVFGTIYG (445 aa)). 4 cysteine pairs are disulfide-bonded: Cys-3–Cys-30, Cys-60–Cys-121, Cys-74–Cys-105, and Cys-92–Cys-116. Asn-67 carries an N-linked (GlcNAc...) asparagine; by host glycan. Positions 98–111 (DRGWGNGCGLFGKG) are fusion peptide. N-linked (GlcNAc...) asparagine; by host glycosylation occurs at Asn-153. Disulfide bonds link Cys-185–Cys-285 and Cys-302–Cys-333. The helical transmembrane segment at 446 to 466 (AAFSGVSWTMKILIGVIITCI) threads the bilayer. Topologically, residues 467–472 (GMNSRS) are cytoplasmic. Residues 473–493 (TSLSVSLVLVGVVTLYLGGMV) traverse the membrane as a helical segment. At 494–495 (HA) the chain is on the extracellular side.

As to quaternary structure, homodimer; in the endoplasmic reticulum and Golgi. Interacts with protein prM. Interacts with non-structural protein 1. Post-translationally, N-glycosylated. In terms of processing, specific enzymatic cleavages in vivo yield mature proteins. Cleavages in the lumen of endoplasmic reticulum are performed by host signal peptidase, wereas cleavages in the cytoplasmic side are performed by serine protease NS3. Signal cleavage at the 2K-4B site requires a prior NS3 protease-mediated cleavage at the 4A-2K site.

Its subcellular location is the virion membrane. The protein localises to the host endoplasmic reticulum membrane. Its function is as follows. Binds to host cell surface receptor and mediates fusion between viral and cellular membranes. Envelope protein is synthesized in the endoplasmic reticulum in the form of heterodimer with protein prM. They play a role in virion budding in the ER, and the newly formed immature particle is covered with 60 spikes composed of heterodimer between precursor prM and envelope protein E. The virion is transported to the Golgi apparatus where the low pH causes dissociation of PrM-E heterodimers and formation of E homodimers. prM-E cleavage is inefficient, and many virions are only partially matured. These uncleaved prM would play a role in immune evasion. The chain is Genome polyprotein from Aedes aegypti (Yellowfever mosquito).